Here is a 65-residue protein sequence, read N- to C-terminus: Large ribosomal subunit protein bL33m (65 aa).

Residues 1–8 (MFLSAVTF) constitute a mitochondrion transit peptide.

Belongs to the bacterial ribosomal protein bL33 family. In terms of assembly, component of the mitochondrial ribosome large subunit (39S) which comprises a 16S rRNA and about 50 distinct proteins.

It localises to the mitochondrion. In Bos taurus (Bovine), this protein is Large ribosomal subunit protein bL33m (MRPL33).